Consider the following 207-residue polypeptide: Uridine kinase (207 aa).

Position 11-18 (11-18 (GGSGSGKT)) interacts with ATP.

This sequence belongs to the uridine kinase family.

The protein localises to the cytoplasm. It catalyses the reaction uridine + ATP = UMP + ADP + H(+). The enzyme catalyses cytidine + ATP = CMP + ADP + H(+). It functions in the pathway pyrimidine metabolism; CTP biosynthesis via salvage pathway; CTP from cytidine: step 1/3. Its pathway is pyrimidine metabolism; UMP biosynthesis via salvage pathway; UMP from uridine: step 1/1. In Staphylococcus haemolyticus (strain JCSC1435), this protein is Uridine kinase.